A 95-amino-acid polypeptide reads, in one-letter code: MKITREQVEHVARLARLELSEAELDTFTGQMDSILSYVEKLNALDTEGIVPTSHAVPMENAFRADEATGSIGVEAALANAPLRAESFFRVPKVIE.

Belongs to the GatC family. Heterotrimer of A, B and C subunits.

The enzyme catalyses L-glutamyl-tRNA(Gln) + L-glutamine + ATP + H2O = L-glutaminyl-tRNA(Gln) + L-glutamate + ADP + phosphate + H(+). The catalysed reaction is L-aspartyl-tRNA(Asn) + L-glutamine + ATP + H2O = L-asparaginyl-tRNA(Asn) + L-glutamate + ADP + phosphate + 2 H(+). In terms of biological role, allows the formation of correctly charged Asn-tRNA(Asn) or Gln-tRNA(Gln) through the transamidation of misacylated Asp-tRNA(Asn) or Glu-tRNA(Gln) in organisms which lack either or both of asparaginyl-tRNA or glutaminyl-tRNA synthetases. The reaction takes place in the presence of glutamine and ATP through an activated phospho-Asp-tRNA(Asn) or phospho-Glu-tRNA(Gln). This is Aspartyl/glutamyl-tRNA(Asn/Gln) amidotransferase subunit C from Geobacter sp. (strain M21).